Consider the following 273-residue polypeptide: Putative phosphoenolpyruvate synthase regulatory protein (273 aa).

154–161 (GVSRSGKT) contacts ADP.

Belongs to the pyruvate, phosphate/water dikinase regulatory protein family. PSRP subfamily.

It catalyses the reaction [pyruvate, water dikinase] + ADP = [pyruvate, water dikinase]-phosphate + AMP + H(+). The enzyme catalyses [pyruvate, water dikinase]-phosphate + phosphate + H(+) = [pyruvate, water dikinase] + diphosphate. Functionally, bifunctional serine/threonine kinase and phosphorylase involved in the regulation of the phosphoenolpyruvate synthase (PEPS) by catalyzing its phosphorylation/dephosphorylation. This is Putative phosphoenolpyruvate synthase regulatory protein from Neisseria gonorrhoeae (strain ATCC 700825 / FA 1090).